The chain runs to 871 residues: DNA mismatch repair protein MutS (871 aa).

Residue 625-632 coordinates ATP; it reads GPNMAGKS.

It belongs to the DNA mismatch repair MutS family.

Functionally, this protein is involved in the repair of mismatches in DNA. It is possible that it carries out the mismatch recognition step. This protein has a weak ATPase activity. This is DNA mismatch repair protein MutS from Chlorobium limicola (strain DSM 245 / NBRC 103803 / 6330).